The chain runs to 756 residues: Ent-kaurene synthase, chloroplastic (756 aa).

Asp-507 and Asp-511 together coordinate Mg(2+). Positions 507-511 (DDFFD) match the DDXXD motif motif. The helical transmembrane segment at 606–622 (YVSFALGPIVLPCLYLV) threads the bilayer. Residues Asn-651, Thr-655, and Glu-659 each contribute to the Mg(2+) site.

It belongs to the terpene synthase family. Mg(2+) is required as a cofactor. As to expression, present in both leaves and flowers.

It is found in the plastid. The protein resides in the chloroplast membrane. It carries out the reaction ent-copalyl diphosphate = ent-kaur-16-ene + diphosphate. It participates in plant hormone biosynthesis; gibberellin biosynthesis. Functionally, involved in the biosynthesis of labdane-type diterpenoid including marrubiin and other labdane-related furanoid diterpenoids with potential applications as anti-diabetics, analgesics or vasorelaxants. Terpene synthase that produces ent-kaurene from ent-copalyl diphosphate (ent-CPP). This chain is Ent-kaurene synthase, chloroplastic, found in Marrubium vulgare (White horehound).